A 304-amino-acid polypeptide reads, in one-letter code: D-alanine--D-alanine ligase (304 aa).

Residues 103-299 (KLIWQALGLP…FADLCIEILK (197 aa)) form the ATP-grasp domain. An ATP-binding site is contributed by 129–184 (EEKLGLPMFVKPAAEGSSVGVVKVKGKGRLKSVYEELKHLQGEIIAERFIGGGEYS). Positions 253, 266, and 268 each coordinate Mg(2+).

This sequence belongs to the D-alanine--D-alanine ligase family. The cofactor is Mg(2+). Mn(2+) serves as cofactor.

Its subcellular location is the cytoplasm. The enzyme catalyses 2 D-alanine + ATP = D-alanyl-D-alanine + ADP + phosphate + H(+). It functions in the pathway cell wall biogenesis; peptidoglycan biosynthesis. Functionally, cell wall formation. In Neisseria meningitidis serogroup C / serotype 2a (strain ATCC 700532 / DSM 15464 / FAM18), this protein is D-alanine--D-alanine ligase.